Reading from the N-terminus, the 148-residue chain is Ribonuclease H (148 aa).

The RNase H type-1 domain maps to 2–143 (TADIIYIYSD…ADVLANQGVL (142 aa)). Mg(2+) contacts are provided by aspartate 11, glutamate 49, aspartate 71, and aspartate 135.

The protein belongs to the RNase H family. In terms of assembly, monomer. Requires Mg(2+) as cofactor.

It is found in the cytoplasm. It catalyses the reaction Endonucleolytic cleavage to 5'-phosphomonoester.. Functionally, endonuclease that specifically degrades the RNA of RNA-DNA hybrids. The chain is Ribonuclease H from Thiobacillus denitrificans (strain ATCC 25259 / T1).